Reading from the N-terminus, the 148-residue chain is Large ribosomal subunit protein bL9 (148 aa).

The protein belongs to the bacterial ribosomal protein bL9 family.

In terms of biological role, binds to the 23S rRNA. In Thermus thermophilus, this protein is Large ribosomal subunit protein bL9.